A 78-amino-acid chain; its full sequence is Large ribosomal subunit protein bL28 (78 aa).

Residues 1 to 26 (MARVCQVTGKRPMSGHNVSHANNKTK) form a disordered region.

Belongs to the bacterial ribosomal protein bL28 family.

This is Large ribosomal subunit protein bL28 from Nitrosomonas europaea (strain ATCC 19718 / CIP 103999 / KCTC 2705 / NBRC 14298).